A 760-amino-acid polypeptide reads, in one-letter code: ATP-dependent zinc metalloprotease FtsH (760 aa).

Over 1–5 (MNRKN) the chain is Cytoplasmic. A helical membrane pass occupies residues 6–26 (VTRTITAIAVVVLLGWSFFYF). Residues 27-110 (SDDTRGYKPV…KVSTVVNQGS (84 aa)) are Extracellular-facing. A helical transmembrane segment spans residues 111–131 (ILGELLVYVLPLLLLVGLFVM). The Cytoplasmic portion of the chain corresponds to 132 to 760 (FSRMQGGARM…EVSRTKPAHG (629 aa)). An ATP-binding site is contributed by 203–210 (GPPGTGKT). Residue histidine 425 participates in Zn(2+) binding. Glutamate 426 is a catalytic residue. Histidine 429 and aspartate 501 together coordinate Zn(2+). The interval 616-760 (DFGGRIPSDK…EVSRTKPAHG (145 aa)) is disordered. A compositionally biased stretch (low complexity) spans 650–669 (AFKAAIAQATQAAEAARSDA). A compositionally biased stretch (acidic residues) spans 740-750 (GSDESSAEQDD).

This sequence in the central section; belongs to the AAA ATPase family. It in the C-terminal section; belongs to the peptidase M41 family. Homohexamer. It depends on Zn(2+) as a cofactor.

The protein resides in the cell membrane. In terms of biological role, acts as a processive, ATP-dependent zinc metallopeptidase for both cytoplasmic and membrane proteins. Plays a role in the quality control of integral membrane proteins. This is ATP-dependent zinc metalloprotease FtsH from Mycobacterium bovis (strain ATCC BAA-935 / AF2122/97).